The primary structure comprises 845 residues: Ribosome-releasing factor 2, mitochondrial (845 aa).

Residues 1-28 (MIIATSLRSQTFCTWRAWRAVHSTAVRL) constitute a mitochondrion transit peptide. Positions 38 to 330 (DRTRNIGIIA…GVVKYLPSPL (293 aa)) constitute a tr-type G domain. Residues 47-54 (AHIDAGKT), 111-115 (DTPGH), and 165-168 (NKMD) contribute to the GTP site.

The protein belongs to the TRAFAC class translation factor GTPase superfamily. Classic translation factor GTPase family. EF-G/EF-2 subfamily.

It is found in the mitochondrion. Mitochondrial GTPase that mediates the disassembly of ribosomes from messenger RNA at the termination of mitochondrial protein biosynthesis. Not involved in the GTP-dependent ribosomal translocation step during translation elongation. The protein is Ribosome-releasing factor 2, mitochondrial of Scheffersomyces stipitis (strain ATCC 58785 / CBS 6054 / NBRC 10063 / NRRL Y-11545) (Yeast).